Reading from the N-terminus, the 905-residue chain is Sun domain-containing protein 1 (905 aa).

3 disordered regions span residues Met1–Gln21, Asn41–Gln166, and Gln207–Asn242. Over Met1–Gln290 the chain is Nuclear. Low complexity-rich tracts occupy residues Asn41–Leu67 and Ser75–Ser101. Over residues Lys107–Asn116 the composition is skewed to basic and acidic residues. A compositionally biased stretch (acidic residues) spans Asp117–Asp126. The span at Tyr129–Ser146 shows a compositional bias: polar residues. The stretch at Leu170–Asn221 forms a coiled coil. Over residues Gln207–Asn227 the composition is skewed to low complexity. A helical membrane pass occupies residues Ala291 to Thr311. At Asn312 to Leu905 the chain is on the perinuclear space side. Coiled-coil stretches lie at residues Lys359–Gln456 and Arg504–Phe609. The 199-residue stretch at Gly662–Ile860 folds into the SUN domain. Residues Glu864–Gln901 are a coiled coil.

In terms of assembly, homodimer and homooligomer.

The protein localises to the nucleus membrane. In terms of biological role, may have an important role in defining the spacing of the nuclear envelope lumen. Essential for centrosome attachment to the nucleus, maintenance of correct ploidy, proper mitosis, association of the centromere cluster with the centrosome and the maintenance of genome stability. Requires direct chromatin binding for inner nuclear membrane targeting. The chain is Sun domain-containing protein 1 (sun1) from Dictyostelium discoideum (Social amoeba).